The following is a 279-amino-acid chain: Tryptophan 2,3-dioxygenase (279 aa).

Residues Phe48 to His52, Tyr110, and Arg114 each bind substrate. His237 contributes to the heme binding site. Thr251 contributes to the substrate binding site.

The protein belongs to the tryptophan 2,3-dioxygenase family. Homotetramer. Heme is required as a cofactor.

It catalyses the reaction L-tryptophan + O2 = N-formyl-L-kynurenine. It participates in amino-acid degradation; L-tryptophan degradation via kynurenine pathway; L-kynurenine from L-tryptophan: step 1/2. Heme-dependent dioxygenase that catalyzes the oxidative cleavage of the L-tryptophan (L-Trp) pyrrole ring and converts L-tryptophan to N-formyl-L-kynurenine. Catalyzes the oxidative cleavage of the indole moiety. This chain is Tryptophan 2,3-dioxygenase, found in Bacillus cereus (strain ZK / E33L).